The primary structure comprises 101 residues: Signal recognition particle 19 kDa protein (101 aa).

The protein belongs to the SRP19 family. In terms of assembly, part of the signal recognition particle protein translocation system, which is composed of SRP and FtsY. Archaeal SRP consists of a 7S RNA molecule of 300 nucleotides and two protein subunits: SRP54 and SRP19.

The protein resides in the cytoplasm. Involved in targeting and insertion of nascent membrane proteins into the cytoplasmic membrane. Binds directly to 7S RNA and mediates binding of the 54 kDa subunit of the SRP. In Methanosarcina mazei (strain ATCC BAA-159 / DSM 3647 / Goe1 / Go1 / JCM 11833 / OCM 88) (Methanosarcina frisia), this protein is Signal recognition particle 19 kDa protein.